We begin with the raw amino-acid sequence, 344 residues long: uncharacterized protein (344 aa).

The signal sequence occupies residues 1-20 (MEIRIMLFILMMMVMPVSYA).

This sequence belongs to the fimbrial protein family.

Functionally, part of the yehABCD fimbrial operon. Could contribute to adhesion to various surfaces in specific environmental niches. This is an uncharacterized protein from Escherichia coli (strain K12).